The sequence spans 114 residues: Putative antiporter subunit mnhC2 (114 aa).

The next 3 helical transmembrane spans lie at 3-23 (LILL…ILSI), 25-45 (LIRI…IIMS), and 72-92 (AIVL…LVLI).

This sequence belongs to the CPA3 antiporters (TC 2.A.63) subunit C family. In terms of assembly, may form a heterooligomeric complex that consists of seven subunits: mnhA2, mnhB2, mnhC2, mnhD2, mnhE2, mnhF2 and mnhG2.

Its subcellular location is the cell membrane. The protein is Putative antiporter subunit mnhC2 (mnhC2) of Staphylococcus epidermidis (strain ATCC 12228 / FDA PCI 1200).